The primary structure comprises 197 residues: Chalcone--flavanone isomerase 2 (197 aa).

3 residues coordinate substrate: threonine 23, asparagine 88, and threonine 165.

The protein belongs to the chalcone isomerase family.

The enzyme catalyses a chalcone = a flavanone.. It functions in the pathway secondary metabolite biosynthesis; flavonoid biosynthesis. In terms of biological role, catalyzes the intramolecular cyclization of bicyclic chalcones into tricyclic (S)-flavanones. Responsible for the isomerization of 4,2',4',6'-tetrahydroxychalcone (also termed chalcone) into naringenin. This is Chalcone--flavanone isomerase 2 (CHI2) from Medicago sativa (Alfalfa).